The sequence spans 561 residues: DNA ligase B (561 aa).

Residue lysine 125 is the N6-AMP-lysine intermediate of the active site.

The protein belongs to the NAD-dependent DNA ligase family. LigB subfamily.

It carries out the reaction NAD(+) + (deoxyribonucleotide)n-3'-hydroxyl + 5'-phospho-(deoxyribonucleotide)m = (deoxyribonucleotide)n+m + AMP + beta-nicotinamide D-nucleotide.. Functionally, catalyzes the formation of phosphodiester linkages between 5'-phosphoryl and 3'-hydroxyl groups in double-stranded DNA using NAD as a coenzyme and as the energy source for the reaction. This chain is DNA ligase B, found in Salmonella dublin (strain CT_02021853).